A 1108-amino-acid polypeptide reads, in one-letter code: Unconventional myosin-Ie (1108 aa).

One can recognise a Myosin motor domain in the interval 19–692 (SGVDDMVLLS…SLFLLEEMRE (674 aa)). ATP is bound at residue 112 to 119 (GESGAGKT). An actin-binding region spans residues 581–591 (PHYIRCIKPNE). The 30-residue stretch at 695–724 (YDGYARVIQKSWRKFVARKKYVQMREEASD) folds into the IQ domain. In terms of domain architecture, TH1 spans 730–922 (KERRRNSINR…NKVLQVSIGP (193 aa)). The disordered stretch occupies residues 919 to 966 (SIGPGLPKNSRPTRRNTTQNTGYSSGTQNANYPVRAAPPPPGYHQNGV). The segment covering 933–949 (RNTTQNTGYSSGTQNAN) has biased composition (polar residues). Ser-980 and Ser-1002 each carry phosphoserine. The segment at 993 to 1053 (ARPPLPRQQS…KPQPKPKPQV (61 aa)) is disordered. The segment covering 999–1013 (RQQSTSSDRVSQTPE) has biased composition (polar residues). Positions 1035-1052 (RPPPAGGRPKPQPKPKPQ) are enriched in pro residues. The SH3 domain occupies 1051 to 1108 (PQVPQCKALYAYDAQDTDELSFNANDIIDIIKEDPSGWWTGRLRGKQGLFPNNYVTKI).

The protein belongs to the TRAFAC class myosin-kinesin ATPase superfamily. Myosin family. As to quaternary structure, interacts with CALM and F-actin. Interacts (via SH3 domain) with SYNJ1, DNM1 and DNM2. Interacts with ARL14EP. Interacts with CARMIL1. Expressed in the immune system. In the kidney, predominantly expressed in the glomerulus, including podocytes.

The protein localises to the cytoplasm. It is found in the cytoskeleton. It localises to the cytoplasmic vesicle. The protein resides in the clathrin-coated vesicle. Its subcellular location is the cell junction. In terms of biological role, actin-based motor molecule with ATPase activity. Unconventional myosins serve in intracellular movements. Their highly divergent tails bind to membranous compartments, which are then moved relative to actin filaments. Binds to membranes containing anionic phospholipids via its tail domain. Involved in clathrin-mediated endocytosis and intracellular movement of clathrin-coated vesicles. Required for normal morphology of the glomerular basement membrane, normal development of foot processes by kidney podocytes and normal kidney function. In dendritic cells, may control the movement of class II-containing cytoplasmic vesicles along the actin cytoskeleton by connecting them with the actin network via ARL14EP and ARL14. This is Unconventional myosin-Ie (MYO1E) from Homo sapiens (Human).